A 112-amino-acid chain; its full sequence is UPF0482 protein Ent638_1930 (112 aa).

The signal sequence occupies residues 1 to 27 (MTTLRKRLCLATLLSLTALAFTAPVSA).

It belongs to the UPF0482 family.

The sequence is that of UPF0482 protein Ent638_1930 from Enterobacter sp. (strain 638).